The chain runs to 2081 residues: RNA1 polyprotein (2081 aa).

Transmembrane regions (helical) follow at residues 481-501 and 515-535; these read ILLL…IYSV and ISLG…LFNS. The SF3 helicase domain maps to 714–881; it reads LKEDHTQLQL…PGVEPGPRGV (168 aa). 741 to 748 is an ATP binding site; that stretch reads GDSGVGKS. Positions 877-900 are disordered; sequence GPRGVDNLEFSEMDNRDSNGEPAY. The Peptidase C3 domain maps to 1166-1388; that stretch reads GAEIPEALEA…ALYADIPHEF (223 aa). Residues His-1210, Glu-1255, and Cys-1348 each act as for picornain 3C-like protease activity in the active site. Positions 1679 to 1810 constitute a RdRp catalytic domain; the sequence is ANHFTGDYSG…SVATPVASVY (132 aa).

The protein localises to the host membrane. The catalysed reaction is RNA(n) + a ribonucleoside 5'-triphosphate = RNA(n+1) + diphosphate. In terms of biological role, picornain 3C-like protease is a thiol protease that probably cleaves the polyprotein. The polypeptide is RNA1 polyprotein (Citrus unshiu (Satsuma mandarin)).